An 87-amino-acid chain; its full sequence is UPF0367 protein Pro_0144 (87 aa).

Belongs to the UPF0367 family.

The polypeptide is UPF0367 protein Pro_0144 (Prochlorococcus marinus (strain SARG / CCMP1375 / SS120)).